We begin with the raw amino-acid sequence, 509 residues long: Coiled-coil domain-containing protein 181 (509 aa).

Residues 60-82 show a composition bias toward basic and acidic residues; that stretch reads EHTKQHSDPDKSLQDDVSPRRND. 2 disordered regions span residues 60–121 and 285–367; these read EHTK…EEDE and GEPL…EEKE. Positions 320 to 334 are enriched in polar residues; the sequence is RTQSARISPVTSTYC. Residues 335 to 375 are a coiled coil; the sequence is LSPRQKELQKQLEQKREKLKREEEQRKIEEEKEKKRENDIV. Over residues 338-367 the composition is skewed to basic and acidic residues; it reads RQKELQKQLEQKREKLKREEEQRKIEEEKE.

It belongs to the CCDC181 family. In terms of assembly, homodimer. Interacts with HOOK1. Interacts with HOOK2. Interacts with HOOK3.

It localises to the cytoplasm. The protein resides in the cytoskeleton. Its subcellular location is the cell projection. It is found in the cilium. The protein localises to the flagellum. Functionally, microtubule-binding protein that localizes to the microtubular manchette of elongating spermatids. This Macaca fascicularis (Crab-eating macaque) protein is Coiled-coil domain-containing protein 181.